Consider the following 178-residue polypeptide: Inner membrane-spanning protein YciB (178 aa).

5 helical membrane passes run 10 to 30 (IVLF…AVLM), 47 to 67 (LQTM…LTLA), 76 to 96 (WKPT…LWAL), 121 to 141 (WAWI…VLHW), and 151 to 171 (LWGY…IAPH).

The protein belongs to the YciB family.

It localises to the cell inner membrane. Functionally, plays a role in cell envelope biogenesis, maintenance of cell envelope integrity and membrane homeostasis. This chain is Inner membrane-spanning protein YciB, found in Verminephrobacter eiseniae (strain EF01-2).